Reading from the N-terminus, the 481-residue chain is Long chain base biosynthesis protein 1b (481 aa).

Residues 32-52 (FGIHIDGHLVVEGLLIAAILF) form a helical membrane-spanning segment.

The protein belongs to the class-II pyridoxal-phosphate-dependent aminotransferase family. As to quaternary structure, heterodimer with LCB2. Component of the serine palmitoyltransferase (SPT) complex, composed of LCB1 and LCB2. The cofactor is pyridoxal 5'-phosphate.

Its subcellular location is the endoplasmic reticulum membrane. It catalyses the reaction L-serine + hexadecanoyl-CoA + H(+) = 3-oxosphinganine + CO2 + CoA. It functions in the pathway lipid metabolism; sphingolipid metabolism. Functionally, serine palmitoyltransferase (SPT). The heterodimer formed with LCB2 constitutes the catalytic core. The polypeptide is Long chain base biosynthesis protein 1b (Oryza sativa subsp. japonica (Rice)).